The primary structure comprises 523 residues: Glutamate--cysteine ligase (523 aa).

This sequence belongs to the glutamate--cysteine ligase type 1 family. Type 1 subfamily.

The enzyme catalyses L-cysteine + L-glutamate + ATP = gamma-L-glutamyl-L-cysteine + ADP + phosphate + H(+). Its pathway is sulfur metabolism; glutathione biosynthesis; glutathione from L-cysteine and L-glutamate: step 1/2. The sequence is that of Glutamate--cysteine ligase from Baumannia cicadellinicola subsp. Homalodisca coagulata.